A 258-amino-acid chain; its full sequence is Short-chain dehydrogenase reductase 3c (258 aa).

Residue 12–36 (IITGGASGIGADAARLFTDHGAKVV) participates in NAD(+) binding. Residue Ser144 coordinates substrate. Tyr156 functions as the Proton acceptor in the catalytic mechanism.

This sequence belongs to the short-chain dehydrogenases/reductases (SDR) family.

This Arabidopsis thaliana (Mouse-ear cress) protein is Short-chain dehydrogenase reductase 3c (SDR3c).